A 147-amino-acid polypeptide reads, in one-letter code: Hemoglobin subunit epsilon-4 (147 aa).

Positions 3–147 (HFTTEEKAAV…VANALAHKYH (145 aa)) constitute a Globin domain. Residues His-64 and His-93 each contribute to the heme b site.

Belongs to the globin family. As to expression, red blood cells.

Its function is as follows. Hemoglobin epsilon chain is a beta-type chain found in early embryos. The protein is Hemoglobin subunit epsilon-4 (HBE4) of Bos taurus (Bovine).